The primary structure comprises 494 residues: Aspartyl/glutamyl-tRNA(Asn/Gln) amidotransferase subunit B (494 aa).

Belongs to the GatB/GatE family. GatB subfamily. In terms of assembly, heterotrimer of A, B and C subunits.

The catalysed reaction is L-glutamyl-tRNA(Gln) + L-glutamine + ATP + H2O = L-glutaminyl-tRNA(Gln) + L-glutamate + ADP + phosphate + H(+). The enzyme catalyses L-aspartyl-tRNA(Asn) + L-glutamine + ATP + H2O = L-asparaginyl-tRNA(Asn) + L-glutamate + ADP + phosphate + 2 H(+). Functionally, allows the formation of correctly charged Asn-tRNA(Asn) or Gln-tRNA(Gln) through the transamidation of misacylated Asp-tRNA(Asn) or Glu-tRNA(Gln) in organisms which lack either or both of asparaginyl-tRNA or glutaminyl-tRNA synthetases. The reaction takes place in the presence of glutamine and ATP through an activated phospho-Asp-tRNA(Asn) or phospho-Glu-tRNA(Gln). This is Aspartyl/glutamyl-tRNA(Asn/Gln) amidotransferase subunit B from Rhodopseudomonas palustris (strain ATCC BAA-98 / CGA009).